The following is a 234-amino-acid chain: Leucyl/phenylalanyl-tRNA--protein transferase (234 aa).

Belongs to the L/F-transferase family.

The protein resides in the cytoplasm. It carries out the reaction N-terminal L-lysyl-[protein] + L-leucyl-tRNA(Leu) = N-terminal L-leucyl-L-lysyl-[protein] + tRNA(Leu) + H(+). It catalyses the reaction N-terminal L-arginyl-[protein] + L-leucyl-tRNA(Leu) = N-terminal L-leucyl-L-arginyl-[protein] + tRNA(Leu) + H(+). The enzyme catalyses L-phenylalanyl-tRNA(Phe) + an N-terminal L-alpha-aminoacyl-[protein] = an N-terminal L-phenylalanyl-L-alpha-aminoacyl-[protein] + tRNA(Phe). In terms of biological role, functions in the N-end rule pathway of protein degradation where it conjugates Leu, Phe and, less efficiently, Met from aminoacyl-tRNAs to the N-termini of proteins containing an N-terminal arginine or lysine. The polypeptide is Leucyl/phenylalanyl-tRNA--protein transferase (Escherichia coli O81 (strain ED1a)).